A 690-amino-acid polypeptide reads, in one-letter code: Eukaryotic translation initiation factor 3 subunit B (690 aa).

Basic and acidic residues predominate over residues 1–11 (MAKKKSEEHSG). Positions 1–36 (MAKKKSEEHSGADANDSDYTEEPNFDDPPNFVDNIS) are disordered. Positions 15 to 25 (NDSDYTEEPNF) are enriched in acidic residues. Positions 57–141 (SVVVVDNMPK…YTFAVNLFTD (85 aa)) constitute an RRM domain. WD repeat units lie at residues 207–246 (TRER…KIQK), 292–331 (GDGM…LLDL), 334–369 (IKIP…TLME), 442–484 (EIRE…KPSL), and 530–575 (PDHF…IRRT). Residues 614-645 (QKDRLRLTRASKELLEKRSQLRETFMEYRNKR) are a coiled coil.

It belongs to the eIF-3 subunit B family. In terms of assembly, component of the eukaryotic translation initiation factor 3 (eIF-3) complex. The eIF-3 complex interacts with pix. Interacts with mxt.

It is found in the cytoplasm. RNA-binding component of the eukaryotic translation initiation factor 3 (eIF-3) complex, which is involved in protein synthesis of a specialized repertoire of mRNAs and, together with other initiation factors, stimulates binding of mRNA and methionyl-tRNAi to the 40S ribosome. The eIF-3 complex specifically targets and initiates translation of a subset of mRNAs involved in cell proliferation. This Drosophila virilis (Fruit fly) protein is Eukaryotic translation initiation factor 3 subunit B.